The sequence spans 318 residues: Aspartate carbamoyltransferase catalytic subunit (318 aa).

Carbamoyl phosphate contacts are provided by R58 and T59. K86 contributes to the L-aspartate binding site. Carbamoyl phosphate is bound by residues R108, H141, and Q144. L-aspartate contacts are provided by R174 and R226. Carbamoyl phosphate contacts are provided by G270 and P271.

The protein belongs to the aspartate/ornithine carbamoyltransferase superfamily. ATCase family. As to quaternary structure, heterododecamer (2C3:3R2) of six catalytic PyrB chains organized as two trimers (C3), and six regulatory PyrI chains organized as three dimers (R2).

The enzyme catalyses carbamoyl phosphate + L-aspartate = N-carbamoyl-L-aspartate + phosphate + H(+). Its pathway is pyrimidine metabolism; UMP biosynthesis via de novo pathway; (S)-dihydroorotate from bicarbonate: step 2/3. Catalyzes the condensation of carbamoyl phosphate and aspartate to form carbamoyl aspartate and inorganic phosphate, the committed step in the de novo pyrimidine nucleotide biosynthesis pathway. This Lactobacillus acidophilus (strain ATCC 700396 / NCK56 / N2 / NCFM) protein is Aspartate carbamoyltransferase catalytic subunit.